The following is a 208-amino-acid chain: Cytidylate kinase (208 aa).

Residue 7–15 (GPAASGKGT) participates in ATP binding.

It belongs to the cytidylate kinase family. Type 1 subfamily.

It is found in the cytoplasm. The catalysed reaction is CMP + ATP = CDP + ADP. It catalyses the reaction dCMP + ATP = dCDP + ADP. This Xanthobacter autotrophicus (strain ATCC BAA-1158 / Py2) protein is Cytidylate kinase.